The sequence spans 650 residues: Acetyl-coenzyme A synthetase (650 aa).

CoA is bound by residues 191-194 (RGGR), threonine 311, and asparagine 335. ATP contacts are provided by residues 387–389 (GEP), 411–416 (DTWWQT), aspartate 501, and arginine 516. Serine 524 lines the CoA pocket. An ATP-binding site is contributed by arginine 527. Mg(2+) contacts are provided by valine 538, histidine 540, and isoleucine 543. Arginine 585 contributes to the CoA binding site. Residue lysine 610 is modified to N6-acetyllysine.

The protein belongs to the ATP-dependent AMP-binding enzyme family. It depends on Mg(2+) as a cofactor. Acetylated. Deacetylation by the SIR2-homolog deacetylase activates the enzyme.

It catalyses the reaction acetate + ATP + CoA = acetyl-CoA + AMP + diphosphate. Its function is as follows. Catalyzes the conversion of acetate into acetyl-CoA (AcCoA), an essential intermediate at the junction of anabolic and catabolic pathways. AcsA undergoes a two-step reaction. In the first half reaction, AcsA combines acetate with ATP to form acetyl-adenylate (AcAMP) intermediate. In the second half reaction, it can then transfer the acetyl group from AcAMP to the sulfhydryl group of CoA, forming the product AcCoA. This Vibrio vulnificus (strain CMCP6) protein is Acetyl-coenzyme A synthetase.